Reading from the N-terminus, the 184-residue chain is Large ribosomal subunit protein uL15 (184 aa).

The interval 1-55 (MDLSSLSPAKGSVKNKKRVGRGQGSGNGTTAGKGNKGQQSRSGYKRPVSEGGQMP) is disordered. Gly residues predominate over residues 21–35 (RGQGSGNGTTAGKGN).

It belongs to the universal ribosomal protein uL15 family. As to quaternary structure, part of the 50S ribosomal subunit.

Binds to the 23S rRNA. The protein is Large ribosomal subunit protein uL15 of Prosthecochloris aestuarii (strain DSM 271 / SK 413).